The primary structure comprises 603 residues: Proline--tRNA ligase (603 aa).

Belongs to the class-II aminoacyl-tRNA synthetase family. ProS type 1 subfamily. Homodimer.

The protein resides in the cytoplasm. The enzyme catalyses tRNA(Pro) + L-proline + ATP = L-prolyl-tRNA(Pro) + AMP + diphosphate. Its function is as follows. Catalyzes the attachment of proline to tRNA(Pro) in a two-step reaction: proline is first activated by ATP to form Pro-AMP and then transferred to the acceptor end of tRNA(Pro). As ProRS can inadvertently accommodate and process non-cognate amino acids such as alanine and cysteine, to avoid such errors it has two additional distinct editing activities against alanine. One activity is designated as 'pretransfer' editing and involves the tRNA(Pro)-independent hydrolysis of activated Ala-AMP. The other activity is designated 'posttransfer' editing and involves deacylation of mischarged Ala-tRNA(Pro). The misacylated Cys-tRNA(Pro) is not edited by ProRS. This chain is Proline--tRNA ligase, found in Arthrobacter sp. (strain FB24).